The sequence spans 181 residues: Acireductone dioxygenase (181 aa).

4 residues coordinate Fe(2+): His-97, His-99, Glu-103, and His-141. The Ni(2+) site is built by His-97, His-99, Glu-103, and His-141.

The protein belongs to the acireductone dioxygenase (ARD) family. Monomer. The cofactor is Fe(2+). Ni(2+) serves as cofactor.

It catalyses the reaction 1,2-dihydroxy-5-(methylsulfanyl)pent-1-en-3-one + O2 = 3-(methylsulfanyl)propanoate + CO + formate + 2 H(+). The enzyme catalyses 1,2-dihydroxy-5-(methylsulfanyl)pent-1-en-3-one + O2 = 4-methylsulfanyl-2-oxobutanoate + formate + 2 H(+). The protein operates within amino-acid biosynthesis; L-methionine biosynthesis via salvage pathway; L-methionine from S-methyl-5-thio-alpha-D-ribose 1-phosphate: step 5/6. In terms of biological role, catalyzes 2 different reactions between oxygen and the acireductone 1,2-dihydroxy-3-keto-5-methylthiopentene (DHK-MTPene) depending upon the metal bound in the active site. Fe-containing acireductone dioxygenase (Fe-ARD) produces formate and 2-keto-4-methylthiobutyrate (KMTB), the alpha-ketoacid precursor of methionine in the methionine recycle pathway. Ni-containing acireductone dioxygenase (Ni-ARD) produces methylthiopropionate, carbon monoxide and formate, and does not lie on the methionine recycle pathway. The protein is Acireductone dioxygenase of Pseudomonas aeruginosa (strain UCBPP-PA14).